The sequence spans 229 residues: Large ribosomal subunit protein uL1 (229 aa).

This sequence belongs to the universal ribosomal protein uL1 family. In terms of assembly, part of the 50S ribosomal subunit.

In terms of biological role, binds directly to 23S rRNA. The L1 stalk is quite mobile in the ribosome, and is involved in E site tRNA release. Its function is as follows. Protein L1 is also a translational repressor protein, it controls the translation of the L11 operon by binding to its mRNA. The polypeptide is Large ribosomal subunit protein uL1 (Lactiplantibacillus plantarum (strain ATCC BAA-793 / NCIMB 8826 / WCFS1) (Lactobacillus plantarum)).